A 637-amino-acid chain; its full sequence is Poly(U)-binding-splicing factor hfp (637 aa).

Basic and acidic residues-rich tracts occupy residues Met-1–Ser-20 and Thr-28–Asp-37. A disordered region spans residues Met-1–Pro-41. Phosphoserine occurs at positions 13 and 30. 2 consecutive RRM domains span residues Cys-130 to Asn-208 and Asn-227 to Thr-305. The RRM 3; atypical domain occupies Arg-537 to Gln-627.

It belongs to the RRM half pint family. In terms of assembly, interacts with enc. However, given the cytoplasmic localization of enc, the relevance of such interaction is unclear. As to expression, expressed in all germline cells and within the follicle cell.

Its subcellular location is the nucleus. In terms of biological role, splicing factor that regulates oogenesis and controls both mitosis and mRNA localization in the germline by regulating mRNA splicing of a subset of genes within the ovary. Probably acts by regulating the alternative splice site selection of the otu transcript. Also regulates the alternative splicing of eIF4E1 and grk, while it is not involved in the splicing of par-1, sqd or psq. Involved in the alternative splicing of the bicistronic pre-mRNA encoding Kdm3 and CG8176; required for the efficient production of mRNA encoding Kdm3 and Kdm3-mediated regulation of rhino-dependent piRNA production. The polypeptide is Poly(U)-binding-splicing factor hfp (Drosophila melanogaster (Fruit fly)).